We begin with the raw amino-acid sequence, 316 residues long: Homoserine kinase (316 aa).

The protein belongs to the pseudomonas-type ThrB family.

The enzyme catalyses L-homoserine + ATP = O-phospho-L-homoserine + ADP + H(+). It participates in amino-acid biosynthesis; L-threonine biosynthesis; L-threonine from L-aspartate: step 4/5. The chain is Homoserine kinase from Pseudomonas aeruginosa (strain LESB58).